We begin with the raw amino-acid sequence, 157 residues long: Cytochrome c-type biogenesis protein CcmE (157 aa).

At 1–8 (MHPVRKQR) the chain is on the cytoplasmic side. Residues 9 to 29 (LMTVLFIVIASSVAVGLMVFA) form a helical; Signal-anchor for type II membrane protein membrane-spanning segment. The Periplasmic segment spans residues 30-157 (LSKNLNLFYP…KTCEGLDYAS (128 aa)). Residues His124 and Tyr128 each coordinate heme.

Belongs to the CcmE/CycJ family.

Its subcellular location is the cell inner membrane. In terms of biological role, heme chaperone required for the biogenesis of c-type cytochromes. Transiently binds heme delivered by CcmC and transfers the heme to apo-cytochromes in a process facilitated by CcmF and CcmH. This is Cytochrome c-type biogenesis protein CcmE from Saccharophagus degradans (strain 2-40 / ATCC 43961 / DSM 17024).